The chain runs to 124 residues: UPF0299 membrane protein VIBHAR_02118 (124 aa).

4 helical membrane passes run 6-26 (LLQL…LGIG), 35-55 (VSVP…TLGL), 72-92 (MILL…MLLA), and 95-115 (LPII…LAWF).

Belongs to the UPF0299 family.

It localises to the cell inner membrane. This Vibrio campbellii (strain ATCC BAA-1116) protein is UPF0299 membrane protein VIBHAR_02118.